We begin with the raw amino-acid sequence, 261 residues long: Calbindin (261 aa).

Ala2 is subject to N-acetylalanine. Residues Ala2–Gln7 are interaction with RANBP9. EF-hand domains follow at residues Ile11 to Ala46, Glu53 to Phe88, Lys98 to Lys133, Lys142 to Phe177, and Met186 to Lys221. Ca(2+)-binding residues include Asp24, Asp26, Ser28, Tyr30, and Glu35. Residues Asp111, Asp113, Ser115, Glu122, Asp155, Asn157, Asp159, Lys161, Glu166, Asp199, Asp201, Asn203, Tyr205, and Glu210 each contribute to the Ca(2+) site.

Belongs to the calbindin family. In terms of assembly, interacts with RANBP9.

Its function is as follows. Buffers cytosolic calcium. May stimulate a membrane Ca(2+)-ATPase and a 3',5'-cyclic nucleotide phosphodiesterase. The protein is Calbindin (CALB1) of Homo sapiens (Human).